Reading from the N-terminus, the 227-residue chain is ATP synthase F(0) complex subunit a (227 aa).

6 consecutive transmembrane segments (helical) span residues 14–34 (LFGI…FPAP), 69–89 (WGPY…LGLL), 98–118 (QLSV…IIGL), 132–152 (EGTP…SLFI), 180–200 (FVLL…LFLL), and 202–222 (LLEV…LSLY).

The protein belongs to the ATPase A chain family. Component of the ATP synthase complex composed at least of ATP5F1A/subunit alpha, ATP5F1B/subunit beta, ATP5MC1/subunit c (homooctomer), MT-ATP6/subunit a, MT-ATP8/subunit 8, ATP5ME/subunit e, ATP5MF/subunit f, ATP5MG/subunit g, ATP5MK/subunit k, ATP5MJ/subunit j, ATP5F1C/subunit gamma, ATP5F1D/subunit delta, ATP5F1E/subunit epsilon, ATP5PF/subunit F6, ATP5PB/subunit b, ATP5PD/subunit d, ATP5PO/subunit OSCP. ATP synthase complex consists of a soluble F(1) head domain (subunits alpha(3) and beta(3)) - the catalytic core - and a membrane F(0) domain - the membrane proton channel (subunits c, a, 8, e, f, g, k and j). These two domains are linked by a central stalk (subunits gamma, delta, and epsilon) rotating inside the F1 region and a stationary peripheral stalk (subunits F6, b, d, and OSCP). Interacts with DNAJC30; interaction is direct.

Its subcellular location is the mitochondrion inner membrane. It carries out the reaction H(+)(in) = H(+)(out). In terms of biological role, subunit a, of the mitochondrial membrane ATP synthase complex (F(1)F(0) ATP synthase or Complex V) that produces ATP from ADP in the presence of a proton gradient across the membrane which is generated by electron transport complexes of the respiratory chain. ATP synthase complex consist of a soluble F(1) head domain - the catalytic core - and a membrane F(1) domain - the membrane proton channel. These two domains are linked by a central stalk rotating inside the F(1) region and a stationary peripheral stalk. During catalysis, ATP synthesis in the catalytic domain of F(1) is coupled via a rotary mechanism of the central stalk subunits to proton translocation. With the subunit c (ATP5MC1), forms the proton-conducting channel in the F(0) domain, that contains two crucial half-channels (inlet and outlet) that facilitate proton movement from the mitochondrial intermembrane space (IMS) into the matrix. Protons are taken up via the inlet half-channel and released through the outlet half-channel, following a Grotthuss mechanism. This chain is ATP synthase F(0) complex subunit a, found in Tetraodon nigroviridis (Spotted green pufferfish).